We begin with the raw amino-acid sequence, 446 residues long: MNAKEANFDGLVGPTHNYAGLSFGNVASLSNEKSDANPKAAAKQGLRKMKQLADLGFAQGVLPPQERPSLRLLRELGFSGKDADVIAKAARQAPELLAAASSASAMWTANAATVSPSADTSDARVHFTPANLCSKLHRAIEHESTRRTLAAIFADEARFAVHDALPGTPALGDEGAANHTRFCAEYGAPGVEFFVYGRAEYRRGPEPTRFPARQTFEASRAVAHRHGLREEATIYAQQRPDVIDAGVFHNDVIAVGNRDTLFCHEHAFVDRQAVYDALAASLGALGAQLNVIEVPDRAVSVADAVGSYLFNSQLLAREDGTQMLVVPQECRENANVAAYLDALVAGNGPIRDVRVFDLRESMKNGGGPACLRLRVVLNDAERAAVKPNVWIGDALFASLDAWIDKHYRDRLSPVDLADPALLDESRTALDELTQILGLGSLYDFQR.

Substrate contacts are provided by residues 19–28 (AGLSFGNVAS), Asn-110, and 137–138 (HR). The active site involves Glu-174. Arg-213 is a substrate binding site. Residue His-249 is part of the active site. Positions 251 and 364 each coordinate substrate. The active-site Nucleophile is Cys-370.

This sequence belongs to the succinylarginine dihydrolase family. As to quaternary structure, homodimer.

It catalyses the reaction N(2)-succinyl-L-arginine + 2 H2O + 2 H(+) = N(2)-succinyl-L-ornithine + 2 NH4(+) + CO2. The protein operates within amino-acid degradation; L-arginine degradation via AST pathway; L-glutamate and succinate from L-arginine: step 2/5. In terms of biological role, catalyzes the hydrolysis of N(2)-succinylarginine into N(2)-succinylornithine, ammonia and CO(2). The sequence is that of N-succinylarginine dihydrolase from Burkholderia mallei (strain NCTC 10247).